The chain runs to 258 residues: Peptide methionine sulfoxide reductase A4, chloroplastic (258 aa).

The transit peptide at 1-53 (MQVLVVSPPLIAAASLSKPLNSLSKAALSFSRAKPICPFPQTSRRPISVYKSP) directs the protein to the chloroplast. An N-acetylmethionine modification is found at M54. The tract at residues 62–89 (GFGSRPQAQADPSSAAIAQGPDDDVPSS) is disordered. S245 is modified (phosphoserine).

The protein belongs to the MsrA Met sulfoxide reductase family. In terms of tissue distribution, expressed in rosette and cauline leaves, and at lower levels in stems and flowers (at protein level).

Its subcellular location is the plastid. It is found in the chloroplast stroma. It catalyses the reaction L-methionyl-[protein] + [thioredoxin]-disulfide + H2O = L-methionyl-(S)-S-oxide-[protein] + [thioredoxin]-dithiol. It carries out the reaction [thioredoxin]-disulfide + L-methionine + H2O = L-methionine (S)-S-oxide + [thioredoxin]-dithiol. Its function is as follows. Catalyzes the reduction of methionine sulfoxide (MetSO) to methionine in proteins. Plays a protective role against oxidative stress by restoring activity to proteins that have been inactivated by methionine oxidation. Prevents the methionine sulfoxidation of the heat shock protein HSP21 and its subsequent inactivation. MSRA family specifically reduces the MetSO S-enantiomer. In Arabidopsis thaliana (Mouse-ear cress), this protein is Peptide methionine sulfoxide reductase A4, chloroplastic (MSR4).